Reading from the N-terminus, the 172-residue chain is RNA pyrophosphohydrolase (172 aa).

Residues 6–149 form the Nudix hydrolase domain; it reads GFRANVGIII…KRDVYRKVMK (144 aa). Positions 38–59 match the Nudix box motif; it reads GGLDDGESVEEAMYRELYEEVG.

It belongs to the Nudix hydrolase family. RppH subfamily. The cofactor is a divalent metal cation.

Accelerates the degradation of transcripts by removing pyrophosphate from the 5'-end of triphosphorylated RNA, leading to a more labile monophosphorylated state that can stimulate subsequent ribonuclease cleavage. This Shewanella frigidimarina (strain NCIMB 400) protein is RNA pyrophosphohydrolase.